A 155-amino-acid polypeptide reads, in one-letter code: SsrA-binding protein (155 aa).

The disordered stretch occupies residues 135–155 (KRESLKRRQDQRDIQRAMKNY).

It belongs to the SmpB family.

It is found in the cytoplasm. Required for rescue of stalled ribosomes mediated by trans-translation. Binds to transfer-messenger RNA (tmRNA), required for stable association of tmRNA with ribosomes. tmRNA and SmpB together mimic tRNA shape, replacing the anticodon stem-loop with SmpB. tmRNA is encoded by the ssrA gene; the 2 termini fold to resemble tRNA(Ala) and it encodes a 'tag peptide', a short internal open reading frame. During trans-translation Ala-aminoacylated tmRNA acts like a tRNA, entering the A-site of stalled ribosomes, displacing the stalled mRNA. The ribosome then switches to translate the ORF on the tmRNA; the nascent peptide is terminated with the 'tag peptide' encoded by the tmRNA and targeted for degradation. The ribosome is freed to recommence translation, which seems to be the essential function of trans-translation. The chain is SsrA-binding protein from Trichormus variabilis (strain ATCC 29413 / PCC 7937) (Anabaena variabilis).